The sequence spans 163 residues: Peptidyl-prolyl cis-trans isomerase FKBP15-2 (163 aa).

Residues 1–25 (MASKMSLRYSLFLIFFSLISLQGFA) form the signal peptide. The 89-residue stretch at 52–140 (GDTIKVHYRG…IFDTELIAVN (89 aa)) folds into the PPIase FKBP-type domain. The tract at residues 142-163 (KPAGGEEYGGDEDDEGYGNDEL) is disordered. Over residues 149–163 (YGGDEDDEGYGNDEL) the composition is skewed to acidic residues. The Prevents secretion from ER signature appears at 160–163 (NDEL).

The protein belongs to the FKBP-type PPIase family.

The protein resides in the endoplasmic reticulum lumen. It carries out the reaction [protein]-peptidylproline (omega=180) = [protein]-peptidylproline (omega=0). PPIases accelerate the folding of proteins. It catalyzes the cis-trans isomerization of proline imidic peptide bonds in oligopeptides. This chain is Peptidyl-prolyl cis-trans isomerase FKBP15-2 (FKBP15-2), found in Arabidopsis thaliana (Mouse-ear cress).